Here is a 202-residue protein sequence, read N- to C-terminus: FMN-dependent NADH:quinone oxidoreductase (202 aa).

Residues Ser9, 15–17 (SAS), and 94–97 (MYNL) contribute to the FMN site.

Belongs to the azoreductase type 1 family. In terms of assembly, homodimer. FMN is required as a cofactor.

The enzyme catalyses 2 a quinone + NADH + H(+) = 2 a 1,4-benzosemiquinone + NAD(+). The catalysed reaction is N,N-dimethyl-1,4-phenylenediamine + anthranilate + 2 NAD(+) = 2-(4-dimethylaminophenyl)diazenylbenzoate + 2 NADH + 2 H(+). Quinone reductase that provides resistance to thiol-specific stress caused by electrophilic quinones. Functionally, also exhibits azoreductase activity. Catalyzes the reductive cleavage of the azo bond in aromatic azo compounds to the corresponding amines. This Gluconobacter oxydans (strain 621H) (Gluconobacter suboxydans) protein is FMN-dependent NADH:quinone oxidoreductase.